The chain runs to 116 residues: Phage-like element PBSX protein XkdD (116 aa).

This chain is Phage-like element PBSX protein XkdD (xkdD), found in Bacillus subtilis (strain 168).